The sequence spans 905 residues: Transcriptional regulator MNL1 (905 aa).

Positions 1–29 (MDSHNNIDQSVSELLSDPASVQQSYNSQL) are enriched in polar residues. 8 disordered regions span residues 1-34 (MDSHNNIDQSVSELLSDPASVQQSYNSQLRGPEF), 312-340 (QTQAQAQAHQQQQQQSQQQHSPQDLASHT), 383-419 (MDQVPSSLHRPSFDLYNHRPSIDSQHSQQSQQRNARY), 434-460 (SEKNTNHNNRSPPTPPTSTSSPQNLLS), 525-544 (TKEEPEDELMQPKKVKKPKR), 584-613 (NISSHHSSGTPSITTGAGGNTLEHSISESS), 625-671 (NVGK…GTVE), and 685-733 (PASE…TSST). Over residues 312–334 (QTQAQAQAHQQQQQQSQQQHSPQ) the composition is skewed to low complexity. Residues 439–460 (NHNNRSPPTPPTSTSSPQNLLS) show a composition bias toward low complexity. Positions 584–598 (NISSHHSSGTPSITT) are enriched in polar residues. Over residues 628 to 639 (KRKNKSYRKPKG) the composition is skewed to basic residues. 2 stretches are compositionally biased toward low complexity: residues 647–669 (QQQQLPLSSGTAGGTSSNNSTGT) and 690–710 (SSLLDNASAGNASASSSEASS). 2 C2H2-type zinc fingers span residues 832 to 855 (YLCNLCQRRFKRHEHLKRHFRSLH) and 861 to 883 (YNCDICHKKFSRSDNLNQHLKIH). A disordered region spans residues 885 to 905 (QEDEKDCADAETGVGMDDASG).

It localises to the nucleus. Its function is as follows. Transcription factor that activates stress response genes via SLE (STRE-like) elements. Required for adaptation to weak acid stress such as acetic acid stress, but seems not involved in the response to heat, osmotic, ethanol, nutrient, oxidative, or heavy-metal stress. Activates a subset of the genes that are repressed by NRG1. In Candida albicans (strain SC5314 / ATCC MYA-2876) (Yeast), this protein is Transcriptional regulator MNL1 (MNL1).